Here is a 952-residue protein sequence, read N- to C-terminus: Isoleucine--tRNA ligase (952 aa).

Residues 58–68 carry the 'HIGH' region motif; that stretch reads PYANGDIHIGH. Residue Glu576 participates in L-isoleucyl-5'-AMP binding. The 'KMSKS' region motif lies at 617–621; the sequence is KMSKS. Lys620 is a binding site for ATP. 4 residues coordinate Zn(2+): Cys915, Cys918, Cys935, and Cys938.

The protein belongs to the class-I aminoacyl-tRNA synthetase family. IleS type 1 subfamily. Monomer. It depends on Zn(2+) as a cofactor.

The protein resides in the cytoplasm. The catalysed reaction is tRNA(Ile) + L-isoleucine + ATP = L-isoleucyl-tRNA(Ile) + AMP + diphosphate. In terms of biological role, catalyzes the attachment of isoleucine to tRNA(Ile). As IleRS can inadvertently accommodate and process structurally similar amino acids such as valine, to avoid such errors it has two additional distinct tRNA(Ile)-dependent editing activities. One activity is designated as 'pretransfer' editing and involves the hydrolysis of activated Val-AMP. The other activity is designated 'posttransfer' editing and involves deacylation of mischarged Val-tRNA(Ile). This chain is Isoleucine--tRNA ligase, found in Aliivibrio fischeri (strain ATCC 700601 / ES114) (Vibrio fischeri).